The following is a 345-amino-acid chain: Protein RecA (345 aa).

80 to 87 (GPESSGKT) is an ATP binding site.

Belongs to the RecA family.

It localises to the cytoplasm. Its function is as follows. Can catalyze the hydrolysis of ATP in the presence of single-stranded DNA, the ATP-dependent uptake of single-stranded DNA by duplex DNA, and the ATP-dependent hybridization of homologous single-stranded DNAs. It interacts with LexA causing its activation and leading to its autocatalytic cleavage. The sequence is that of Protein RecA from Mycoplasma mycoides subsp. mycoides SC (strain CCUG 32753 / NCTC 10114 / PG1).